The sequence spans 31 residues: Cytochrome b6-f complex subunit 6 (31 aa).

Residues 4–24 traverse the membrane as a helical segment; the sequence is LLSYFAFLMLALTFTLALFVG.

This sequence belongs to the PetL family. As to quaternary structure, the 4 large subunits of the cytochrome b6-f complex are cytochrome b6, subunit IV (17 kDa polypeptide, PetD), cytochrome f and the Rieske protein, while the 4 small subunits are PetG, PetL, PetM and PetN. The complex functions as a dimer.

It localises to the plastid. Its subcellular location is the chloroplast thylakoid membrane. In terms of biological role, component of the cytochrome b6-f complex, which mediates electron transfer between photosystem II (PSII) and photosystem I (PSI), cyclic electron flow around PSI, and state transitions. PetL is important for photoautotrophic growth as well as for electron transfer efficiency and stability of the cytochrome b6-f complex. The chain is Cytochrome b6-f complex subunit 6 from Adiantum capillus-veneris (Maidenhair fern).